The chain runs to 612 residues: Membrane protein insertase YidC (612 aa).

7 consecutive transmembrane segments (helical) span residues 4–24 (NTII…YLNH), 329–349 (LVPL…IPIF), 358–378 (VNLG…LFPL), 434–454 (ILLQ…AIGL), 484–504 (FLGN…ILNT), 524–544 (LTMY…PAGL), and 546–566 (YYYL…RGLV).

The protein belongs to the OXA1/ALB3/YidC family. Type 1 subfamily. In terms of assembly, interacts with the Sec translocase complex via SecD. Specifically interacts with transmembrane segments of nascent integral membrane proteins during membrane integration.

It is found in the cell inner membrane. Required for the insertion and/or proper folding and/or complex formation of integral membrane proteins into the membrane. Involved in integration of membrane proteins that insert both dependently and independently of the Sec translocase complex, as well as at least some lipoproteins. Aids folding of multispanning membrane proteins. This is Membrane protein insertase YidC from Azobacteroides pseudotrichonymphae genomovar. CFP2.